An 859-amino-acid chain; its full sequence is Probable helicase A859L (859 aa).

One can recognise a Helicase ATP-binding domain in the interval 178-349 (YQELQRSGRA…KNRDLFGGVA (172 aa)). 191 to 198 (MACRCGKT) is a binding site for ATP. Positions 298-301 (DECH) match the DEAH box motif. Residues 394 to 553 (QIIMALAYLK…RFYEHLLNPS (160 aa)) form the Helicase C-terminal domain.

The protein belongs to the asfivirus helicase A859L family.

This Ornithodoros (relapsing fever ticks) protein is Probable helicase A859L.